Here is a 167-residue protein sequence, read N- to C-terminus: EF-hand calcium-binding domain-containing protein 11 (167 aa).

EF-hand domains follow at residues 17–52 (AERK…LFGY), 91–126 (DPYE…VAPR), and 127–162 (LQER…GLAN). The Ca(2+) site is built by D140, D142, D144, H146, and D151.

This Danio rerio (Zebrafish) protein is EF-hand calcium-binding domain-containing protein 11 (efcab11).